The chain runs to 99 residues: Orphan antixoxin protein TacA (99 aa).

This sequence belongs to the TacA antitoxin family.

Functionally, putative antitoxin component of a toxin-antitoxin (TA) system; its cognate toxin (usually a tRNA acetylase) is unknown. This is Orphan antixoxin protein TacA from Haemophilus influenzae (strain ATCC 51907 / DSM 11121 / KW20 / Rd).